A 222-amino-acid chain; its full sequence is Ribosomal RNA large subunit methyltransferase E (222 aa).

Basic and acidic residues predominate over residues M1–K13. Positions M1–S22 are disordered. 5 residues coordinate S-adenosyl-L-methionine: G75, W77, D94, D110, and D134. K174 serves as the catalytic Proton acceptor.

This sequence belongs to the class I-like SAM-binding methyltransferase superfamily. RNA methyltransferase RlmE family.

The protein resides in the cytoplasm. It carries out the reaction uridine(2552) in 23S rRNA + S-adenosyl-L-methionine = 2'-O-methyluridine(2552) in 23S rRNA + S-adenosyl-L-homocysteine + H(+). Its function is as follows. Specifically methylates the uridine in position 2552 of 23S rRNA at the 2'-O position of the ribose in the fully assembled 50S ribosomal subunit. The sequence is that of Ribosomal RNA large subunit methyltransferase E from Novosphingobium aromaticivorans (strain ATCC 700278 / DSM 12444 / CCUG 56034 / CIP 105152 / NBRC 16084 / F199).